The following is a 112-amino-acid chain: UPF0212 protein Mboo_1659 (112 aa).

It belongs to the UPF0212 family.

This Methanoregula boonei (strain DSM 21154 / JCM 14090 / 6A8) protein is UPF0212 protein Mboo_1659.